Reading from the N-terminus, the 387-residue chain is MLRFLTAGESHGPALTAIVEGMVAGLPVTHEYINTQLARRQGGYGRGGRMKIEKDEVQFLSGIRGGYTTGSPITLQIANRDWQNWCHIMASGPDALLDERVVTRPRPGHADLPGAIKYDHSDIRNILERSSARETAARVAVGSMARCLLEELDIKLVGFVCSIGSIKASVAENLSIEDLVARTQSSQLFCPDEQAEEAMVKEIDQAKETGDSLGGVFEVRVYGVPVGLGSHVQWDRKLDSRLAGAMMGIQAIKGVEIGLGFGAAAVPGSQVHDEIYYAAQRGFYRGSNRAGGIEGGITNGEPLILRAAMKPIPTLYKPLRSVDIKNKEPYLASVERSDVCAVPAACVVGEAVVAWELAVALMEKFGGDSLGEIKARLNQWQQWVRQV.

2 residues coordinate NADP(+): R40 and R46. Residues R129–S131, Q250–A251, G295, K310–T314, and R336 contribute to the FMN site.

It belongs to the chorismate synthase family. As to quaternary structure, homotetramer. Requires FMNH2 as cofactor.

It carries out the reaction 5-O-(1-carboxyvinyl)-3-phosphoshikimate = chorismate + phosphate. It participates in metabolic intermediate biosynthesis; chorismate biosynthesis; chorismate from D-erythrose 4-phosphate and phosphoenolpyruvate: step 7/7. Its function is as follows. Catalyzes the anti-1,4-elimination of the C-3 phosphate and the C-6 proR hydrogen from 5-enolpyruvylshikimate-3-phosphate (EPSP) to yield chorismate, which is the branch point compound that serves as the starting substrate for the three terminal pathways of aromatic amino acid biosynthesis. This reaction introduces a second double bond into the aromatic ring system. In Desulforamulus reducens (strain ATCC BAA-1160 / DSM 100696 / MI-1) (Desulfotomaculum reducens), this protein is Chorismate synthase.